A 668-amino-acid polypeptide reads, in one-letter code: RING finger protein 214 (668 aa).

Disordered stretches follow at residues 1 to 87 (MAAS…AHEE) and 103 to 125 (NGSQ…TSLR). Ala-2 carries the N-acetylalanine modification. Phosphoserine occurs at positions 15, 40, 48, and 54. The segment covering 43–59 (KQKNLSPPSVSSQMITK) has biased composition (polar residues). A compositionally biased stretch (basic and acidic residues) spans 60 to 71 (ESNRNAHLEHPE). A Phosphoserine modification is found at Ser-196. Residues 220–379 (QDIEKNLDKM…AEKEAELHLT (160 aa)) adopt a coiled-coil conformation. Residues 486 to 552 (FPILNPALSQ…SSETPRPQPV (67 aa)) are disordered. A phosphoserine mark is found at Ser-497, Ser-511, and Ser-516. The span at 523 to 536 (PHMPPAASIPPPPG) shows a compositional bias: pro residues. The RING-type; atypical zinc finger occupies 623-665 (CLMCQKLVQPSELHPMACTHALHKECIKFWAQTNTNDTCPFCP).

This is RING finger protein 214 (Rnf214) from Mus musculus (Mouse).